The following is a 735-amino-acid chain: Ribosomal RNA large subunit methyltransferase K/L (735 aa).

Positions 45–156 constitute a THUMP domain; it reads DGYRACLWSR…RDSLSFSLDL (112 aa).

This sequence belongs to the methyltransferase superfamily. RlmKL family.

The protein resides in the cytoplasm. The enzyme catalyses guanosine(2445) in 23S rRNA + S-adenosyl-L-methionine = N(2)-methylguanosine(2445) in 23S rRNA + S-adenosyl-L-homocysteine + H(+). It carries out the reaction guanosine(2069) in 23S rRNA + S-adenosyl-L-methionine = N(2)-methylguanosine(2069) in 23S rRNA + S-adenosyl-L-homocysteine + H(+). In terms of biological role, specifically methylates the guanine in position 2445 (m2G2445) and the guanine in position 2069 (m7G2069) of 23S rRNA. This Allochromatium vinosum (strain ATCC 17899 / DSM 180 / NBRC 103801 / NCIMB 10441 / D) (Chromatium vinosum) protein is Ribosomal RNA large subunit methyltransferase K/L.